Here is a 594-residue protein sequence, read N- to C-terminus: Actin-histidine N-methyltransferase (594 aa).

Residues methionine 1–proline 22 are disordered. The span at glutamine 10–valine 20 shows a compositional bias: polar residues. S-adenosyl-L-methionine-binding positions include arginine 75, glutamate 104–phenylalanine 106, arginine 254, aspartate 275–histidine 279, and serine 325–phenylalanine 327. One can recognise an SET domain in the interval glutamate 94–glycine 314. A disordered region spans residues glycine 551–leucine 594.

Belongs to the class V-like SAM-binding methyltransferase superfamily. SETD3 actin-histidine methyltransferase family. Interacts with MYOD1. Phosphorylated by GSK3B, which is required for recognition by the SCF(FBXW7) complex and subsequent degradation. Post-translationally, ubiquitinated by the SCF(FBXW7) complex following phosphorylation by GSK3B, leading to its degradation by the proteasome. In terms of tissue distribution, prominently expressed in the heart and skeletal muscles and is also detected weakly in the stomach, small intestine, and colon.

Its subcellular location is the cytoplasm. The protein localises to the nucleus. The catalysed reaction is L-histidyl-[protein] + S-adenosyl-L-methionine = N(tele)-methyl-L-histidyl-[protein] + S-adenosyl-L-homocysteine + H(+). Protein-histidine N-methyltransferase that specifically mediates 3-methylhistidine (tele-methylhistidine) methylation of actin at 'His-73'. Histidine methylation of actin is required for smooth muscle contraction of the laboring uterus during delivery. Does not have protein-lysine N-methyltransferase activity and probably only catalyzes histidine methylation of actin. The polypeptide is Actin-histidine N-methyltransferase (Mus musculus (Mouse)).